Consider the following 1038-residue polypeptide: Translation initiation factor IF-2 (1038 aa).

Disordered stretches follow at residues 39-346 and 403-451; these read TISE…KWQE and KPKA…PEKV. Over residues 103–125 the composition is skewed to polar residues; that stretch reads RNTTSNAPEASVANNQIASSEAN. Residues 157-176 show a composition bias toward low complexity; that stretch reads PQKPAAPEAEPEAQSQAPAK. Composition is skewed to basic and acidic residues over residues 178-197 and 226-243; these read AVEKPEKSAQPRPGKPERQP and PILKRDRPRREDERDQAK. Residues 407–423 are compositionally biased toward low complexity; the sequence is ARAATAATAAPISSPTT. A compositionally biased stretch (basic and acidic residues) spans 431–450; the sequence is NNRDQNRRQETEVKRERPEK. One can recognise a tr-type G domain in the interval 532–705; it reads RRPPVVTIMG…LLVAEVGELS (174 aa). The segment at 541–548 is G1; sequence GHVDHGKT. Residue 541–548 coordinates GTP; it reads GHVDHGKT. A G2 region spans residues 566 to 570; sequence GITQH. A G3 region spans residues 591 to 594; the sequence is DTPG. GTP contacts are provided by residues 591–595 and 645–648; these read DTPGH and NKID. The tract at residues 645 to 648 is G4; sequence NKID. Positions 681 to 683 are G5; that stretch reads SAI.

It belongs to the TRAFAC class translation factor GTPase superfamily. Classic translation factor GTPase family. IF-2 subfamily.

The protein resides in the cytoplasm. Functionally, one of the essential components for the initiation of protein synthesis. Protects formylmethionyl-tRNA from spontaneous hydrolysis and promotes its binding to the 30S ribosomal subunits. Also involved in the hydrolysis of GTP during the formation of the 70S ribosomal complex. The sequence is that of Translation initiation factor IF-2 from Trichormus variabilis (strain ATCC 29413 / PCC 7937) (Anabaena variabilis).